Consider the following 666-residue polypeptide: ATP-dependent zinc metalloprotease FtsH (666 aa).

Residues 1 to 23 are disordered; it reads MSREVTSGLPQDKPTGSAPPPPP. The Cytoplasmic portion of the chain corresponds to 1 to 27; sequence MSREVTSGLPQDKPTGSAPPPPPPWRR. A helical membrane pass occupies residues 28–48; it reads WLLPIGLLVSLVLLFTFPMRP. At 49 to 125 the chain is on the extracellular side; it reads SSGKTLTYSE…RPPGPSLASQ (77 aa). The helical transmembrane segment at 126-146 threads the bilayer; it reads VLAGVLSFLPFLLLLGLFAYS. Residues 147–666 are Cytoplasmic-facing; it reads GRRAGAGFLA…RTAASSDDLL (520 aa). 219 to 226 serves as a coordination point for ATP; sequence GPPGTGKT. Residue His442 coordinates Zn(2+). Residue Glu443 is part of the active site. 2 residues coordinate Zn(2+): His446 and Asp518. Residues 626 to 666 are disordered; that stretch reads PEEHREAAARHVRRPGIAAATGASMAGGSEPRTAASSDDLL. A compositionally biased stretch (low complexity) spans 641 to 653; it reads GIAAATGASMAGG.

This sequence in the central section; belongs to the AAA ATPase family. In the C-terminal section; belongs to the peptidase M41 family. Homohexamer. It depends on Zn(2+) as a cofactor.

It is found in the cell membrane. Functionally, acts as a processive, ATP-dependent zinc metallopeptidase for both cytoplasmic and membrane proteins. Plays a role in the quality control of integral membrane proteins. The chain is ATP-dependent zinc metalloprotease FtsH from Acidothermus cellulolyticus (strain ATCC 43068 / DSM 8971 / 11B).